A 795-amino-acid polypeptide reads, in one-letter code: Phenylalanine--tRNA ligase beta subunit (795 aa).

The region spanning Ala39–Arg148 is the tRNA-binding domain. The region spanning Pro401–Asp476 is the B5 domain. Mg(2+) contacts are provided by Asp454, Asp460, Glu463, and Glu464. The FDX-ACB domain occupies Ser701 to Arg794.

The protein belongs to the phenylalanyl-tRNA synthetase beta subunit family. Type 1 subfamily. Tetramer of two alpha and two beta subunits. Mg(2+) is required as a cofactor.

The protein resides in the cytoplasm. The enzyme catalyses tRNA(Phe) + L-phenylalanine + ATP = L-phenylalanyl-tRNA(Phe) + AMP + diphosphate + H(+). This chain is Phenylalanine--tRNA ligase beta subunit, found in Salmonella choleraesuis (strain SC-B67).